The following is a 332-amino-acid chain: Multiple virulence factor regulator MvfR (332 aa).

The HTH lysR-type domain maps to 4–61 (HNLNHVNMFLQVIASGSISSAARILRKSHTAVSSAVSNLEIDLCVELVRRDGYKVEPT). A DNA-binding region (H-T-H motif) is located at residues 21–40 (ISSAARILRKSHTAVSSAVS).

It belongs to the LysR transcriptional regulatory family. Forms homooligomers.

The protein localises to the cell inner membrane. Its subcellular location is the secreted. Its activity is regulated as follows. Both 3,4-dihydroxy-2-heptylquinoline (PQS) and its precursor 4-hydroxy-2-heptylquinoline (HHQ) function as ligands and promote MvfR DNA-binding activity leading to transcriptional activation. Transcription regulator that plays a critical role in virulence by positively regulating the expression of multiple quorum sensing (QS)-regulated virulence factors, genes involved in protein secretion, translation, response to oxidative stress and the phnAB operon. At the stationary phase, negatively autoregulates its function through cleavage and translocation to the extracellular space. The sequence is that of Multiple virulence factor regulator MvfR from Pseudomonas aeruginosa (strain ATCC 15692 / DSM 22644 / CIP 104116 / JCM 14847 / LMG 12228 / 1C / PRS 101 / PAO1).